Consider the following 567-residue polypeptide: TGF-beta receptor type-2 (567 aa).

The N-terminal stretch at M1 to T23 is a signal peptide. The Extracellular segment spans residues I24–Q166. 6 cysteine pairs are disulfide-bonded: C51–C84, C54–C71, C61–C67, C77–C101, C121–C136, and C138–C143. N-linked (GlcNAc...) asparagine glycosylation is found at N70 and N94. The chain crosses the membrane as a helical span at residues V167–Y187. The Cytoplasmic segment spans residues C188–K567. Residues I244–R546 enclose the Protein kinase domain. ATP-binding positions include V250–V258 and K277. Catalysis depends on D379, which acts as the Proton acceptor. A phosphoserine mark is found at S409, S548, and S553. Residues E545–K567 form a disordered region.

Belongs to the protein kinase superfamily. TKL Ser/Thr protein kinase family. TGFB receptor subfamily. As to quaternary structure, homodimer. Heterohexamer; TGFB1, TGFB2 and TGFB3 homodimeric ligands assemble a functional receptor composed of two TGFBR1 and TGFBR2 heterodimers to form a ligand-receptor heterohexamer. The respective affinity of TGFRB1 and TGFRB2 for the ligands may modulate the kinetics of assembly of the receptor and may explain the different biological activities of TGFB1, TGFB2 and TGFB3. Component of a complex composed of TSC22D1 (via N-terminus), TGFBR1 and TGFBR2; the interaction between TSC22D1 and TGFBR1 is inhibited by SMAD7 and promoted by TGFB1. Interacts with DAXX. Interacts with DYNLT4. Interacts with ZFYVE9; ZFYVE9 recruits SMAD2 and SMAD3 to the TGF-beta receptor. Interacts with and is activated by SCUBE3; this interaction does not affect TGFB1-binding to TGFBR2. Interacts with VPS39; this interaction is independent of the receptor kinase activity and of the presence of TGF-beta. Interacts with CLU. Mg(2+) is required as a cofactor. The cofactor is Mn(2+). Post-translationally, phosphorylated on a Ser/Thr residue in the cytoplasmic domain. Widely expressed in adult. Expressed primarily in mesenchyme and epidermis of the midgestational fetus.

It is found in the cell membrane. It localises to the membrane raft. It carries out the reaction L-threonyl-[receptor-protein] + ATP = O-phospho-L-threonyl-[receptor-protein] + ADP + H(+). The catalysed reaction is L-seryl-[receptor-protein] + ATP = O-phospho-L-seryl-[receptor-protein] + ADP + H(+). In terms of biological role, transmembrane serine/threonine kinase forming with the TGF-beta type I serine/threonine kinase receptor, TGFBR1, the non-promiscuous receptor for the TGF-beta cytokines TGFB1, TGFB2 and TGFB3. Transduces the TGFB1, TGFB2 and TGFB3 signal from the cell surface to the cytoplasm and is thus regulating a plethora of physiological and pathological processes including cell cycle arrest in epithelial and hematopoietic cells, control of mesenchymal cell proliferation and differentiation, wound healing, extracellular matrix production, immunosuppression and carcinogenesis. The formation of the receptor complex composed of 2 TGFBR1 and 2 TGFBR2 molecules symmetrically bound to the cytokine dimer results in the phosphorylation and the activation of TGFRB1 by the constitutively active TGFBR2. Activated TGFBR1 phosphorylates SMAD2 which dissociates from the receptor and interacts with SMAD4. The SMAD2-SMAD4 complex is subsequently translocated to the nucleus where it modulates the transcription of the TGF-beta-regulated genes. This constitutes the canonical SMAD-dependent TGF-beta signaling cascade. Also involved in non-canonical, SMAD-independent TGF-beta signaling pathways. Functionally, has transforming growth factor beta-activated receptor activity. The sequence is that of TGF-beta receptor type-2 (Tgfbr2) from Mus musculus (Mouse).